Here is a 213-residue protein sequence, read N- to C-terminus: Cell division protein SepF 2 (213 aa).

The tract at residues 16–89 (EDDGYDGRGF…ASLAAESSRP (74 aa)) is disordered. The segment covering 27-39 (PDDDFEPELDPEP) has biased composition (acidic residues).

The protein belongs to the SepF family. In terms of assembly, homodimer. Interacts with FtsZ.

The protein localises to the cytoplasm. In terms of biological role, cell division protein that is part of the divisome complex and is recruited early to the Z-ring. Probably stimulates Z-ring formation, perhaps through the cross-linking of FtsZ protofilaments. Its function overlaps with FtsA. The polypeptide is Cell division protein SepF 2 (Streptomyces coelicolor (strain ATCC BAA-471 / A3(2) / M145)).